A 559-amino-acid chain; its full sequence is Myb/SANT-like DNA-binding domain-containing protein 2 (559 aa).

The tract at residues 1-62 (MAAPCGSELP…GSAAGSGAAA (62 aa)) is disordered. A phosphoserine mark is found at S13, S24, S27, S32, and S48. Residues 46–61 (GASPLGPGSAAGSGAA) are compositionally biased toward low complexity. In terms of domain architecture, Myb-like spans 103 to 173 (SWTPAETNAL…QCRERIKTLR (71 aa)). Residues K268 and K343 each participate in a glycyl lysine isopeptide (Lys-Gly) (interchain with G-Cter in SUMO2) cross-link. S436 carries the phosphoserine modification.

This is Myb/SANT-like DNA-binding domain-containing protein 2 (Msantd2) from Mus musculus (Mouse).